Reading from the N-terminus, the 553-residue chain is Putative transport protein YidE (553 aa).

5 helical membrane passes run 4-24 (IALT…IGNV), 28-48 (GIGL…HFVS), 65-85 (FGLI…FFAS), 95-115 (LFAV…HKLF), and 158-178 (MSYA…MWML). RCK C-terminal domains lie at 191 to 276 (QQHE…VIGQ) and 279 to 361 (DTSL…VLGN). Helical transmembrane passes span 371-391 (MLPV…PVFV), 393-413 (GFPA…ALIL), 439-459 (IVLF…NTLV), 464-484 (LSWI…VGIL), 493-513 (YLTM…LAFA), and 533-553 (LVMF…WSIG).

It belongs to the AAE transporter (TC 2.A.81) family. YidE subfamily.

Its subcellular location is the cell membrane. The polypeptide is Putative transport protein YidE (Shigella flexneri serotype 5b (strain 8401)).